Reading from the N-terminus, the 26-residue chain is Oxyopinin-3b (26 aa).

Expressed by the venom gland.

It is found in the secreted. Functionally, may have cytolytic and antimicrobial activity. This Oxyopes takobius (Lynx spider) protein is Oxyopinin-3b.